Here is a 110-residue protein sequence, read N- to C-terminus: Large ribosomal subunit protein uL22 (110 aa).

This sequence belongs to the universal ribosomal protein uL22 family. Part of the 50S ribosomal subunit.

Its function is as follows. This protein binds specifically to 23S rRNA; its binding is stimulated by other ribosomal proteins, e.g. L4, L17, and L20. It is important during the early stages of 50S assembly. It makes multiple contacts with different domains of the 23S rRNA in the assembled 50S subunit and ribosome. In terms of biological role, the globular domain of the protein is located near the polypeptide exit tunnel on the outside of the subunit, while an extended beta-hairpin is found that lines the wall of the exit tunnel in the center of the 70S ribosome. The polypeptide is Large ribosomal subunit protein uL22 (Exiguobacterium sp. (strain ATCC BAA-1283 / AT1b)).